Consider the following 643-residue polypeptide: Macrolide export ATP-binding/permease protein MacB (643 aa).

The ABC transporter domain maps to 6-244 (IELKGVSRVF…QVRSPFGVRH (239 aa)). 42–49 (GASGSGKS) contributes to the ATP binding site. 4 helical membrane passes run 270–290 (VLTLLGIVIGVASVIVMLAIG), 518–538 (LTILLGSIAAISLLVGGIGVM), 569–589 (FLIEAVVVSALGGLIGVVIGL), and 606–626 (LMPIVWAFGCAFVTGLLFGYL).

It belongs to the ABC transporter superfamily. Macrolide exporter (TC 3.A.1.122) family. As to quaternary structure, homodimer.

The protein localises to the cell inner membrane. Its function is as follows. Non-canonical ABC transporter that contains transmembrane domains (TMD), which form a pore in the inner membrane, and an ATP-binding domain (NBD), which is responsible for energy generation. Confers resistance against macrolides. The polypeptide is Macrolide export ATP-binding/permease protein MacB (Wolinella succinogenes (strain ATCC 29543 / DSM 1740 / CCUG 13145 / JCM 31913 / LMG 7466 / NCTC 11488 / FDC 602W) (Vibrio succinogenes)).